We begin with the raw amino-acid sequence, 880 residues long: MOG interacting and ectopic P-granules protein 1 (880 aa).

Polar residues predominate over residues 1–20 (MVTSDETVLATTTNKTSITT). Disordered regions lie at residues 1–37 (MVTS…SETD), 82–257 (DKVE…DDNE), and 350–370 (ERPK…QHNP). Basic and acidic residues predominate over residues 23 to 37 (MEPKSSDESTDSETD). Polar residues predominate over residues 87–105 (ATNSVVDLSSNGSSATTSV). Acidic residues predominate over residues 108-120 (EEQEEKANEDETN). Basic and acidic residues-rich tracts occupy residues 154 to 170 (SKSD…IKDS) and 183 to 193 (KPEEKEEKNDT). The segment covering 215–224 (QLDDDDDDIQ) has biased composition (acidic residues). Composition is skewed to basic and acidic residues over residues 235-252 (QKTE…KAEP) and 350-364 (ERPK…ERQQ). C2H2-type zinc fingers lie at residues 436-459 (SRCG…ETLH) and 465-488 (FQCT…FEAH). Residues 501–523 (YPCAICEEDFNFKGVREQHYKQC) form a CCHC-type zinc finger. C2H2-type zinc fingers lie at residues 728–751 (FQCE…QVLH), 768–791 (LACS…VMSH), 809–830 (GRCK…VADH), and 841–864 (YSCD…SSTH).

In terms of assembly, interacts with hda-1, let-418, lin-1, mog-1, mog-4, mog-5, mog-6, pie-1 and unc-98.

The protein localises to the nucleus. Functionally, has a broad role in development, specifically in the genetic pathway SynMuvB that negatively regulates specification of the vulval cell fate. Required for fem-3 3'-UTR-mediated repression in the regulation of the sperm/oocyte switch. Acts by regulating the translation of fem-3 mRNA, by binding to its 3'-UTR. The sequence is that of MOG interacting and ectopic P-granules protein 1 from Caenorhabditis briggsae.